A 167-amino-acid polypeptide reads, in one-letter code: Leptin (167 aa).

Positions 1 to 21 (MYWRTLWGFLWLWPYLFYIQA) are cleaved as a signal peptide. A disulfide bridge links C117 with C167.

The protein belongs to the leptin family.

It localises to the secreted. In terms of biological role, key player in the regulation of energy balance and body weight control. Once released into the circulation, has central and peripheral effects by binding LEPR, found in many tissues, which results in the activation of several major signaling pathways. In the hypothalamus, acts as an appetite-regulating factor that induces a decrease in food intake and an increase in energy consumption by inducing anorexinogenic factors and suppressing orexigenic neuropeptides, also regulates bone mass and secretion of hypothalamo-pituitary-adrenal hormones. In the periphery, increases basal metabolism, influences reproductive function, regulates pancreatic beta-cell function and insulin secretion, is pro-angiogenic for endothelial cell and affects innate and adaptive immunity. In the arcuate nucleus of the hypothalamus, activates by depolarization POMC neurons inducing FOS and SOCS3 expression to release anorexigenic peptides and inhibits by hyperpolarization NPY neurons inducing SOCS3 with a consequent reduction on release of orexigenic peptides. In addition to its known satiety inducing effect, has a modulatory role in nutrient absorption. In the intestine, reduces glucose absorption by enterocytes by activating PKC and leading to a sequential activation of p38, PI3K and ERK signaling pathways which exerts an inhibitory effect on glucose absorption. Acts as a growth factor on certain tissues, through the activation of different signaling pathways increases expression of genes involved in cell cycle regulation such as CCND1, via JAK2-STAT3 pathway, or VEGFA, via MAPK1/3 and PI3K-AKT1 pathways. May also play an apoptotic role via JAK2-STAT3 pathway and up-regulation of BIRC5 expression. Pro-angiogenic, has mitogenic activity on vascular endothelial cells and plays a role in matrix remodeling by regulating the expression of matrix metalloproteinases (MMPs) and tissue inhibitors of metalloproteinases (TIMPs). In innate immunity, modulates the activity and function of neutrophils by increasing chemotaxis and the secretion of oxygen radicals. Increases phagocytosis by macrophages and enhances secretion of pro-inflammatory mediators. Increases cytotoxic ability of NK cells. Plays a pro-inflammatory role, in synergy with IL1B, by inducing NOS2 which promotes the production of IL6, IL8 and Prostaglandin E2, through a signaling pathway that involves JAK2, PI3K, MAP2K1/MEK1 and MAPK14/p38. In adaptive immunity, promotes the switch of memory T-cells towards T helper-1 cell immune responses. Increases CD4(+)CD25(-) T-cell proliferation and reduces autophagy during TCR (T-cell receptor) stimulation, through MTOR signaling pathway activation and BCL2 up-regulation. The chain is Leptin (LEP) from Macaca mulatta (Rhesus macaque).